We begin with the raw amino-acid sequence, 743 residues long: TSL-kinase interacting protein 1 (743 aa).

An SANT domain is found at 53–104; the sequence is RQWAAWTHQEEESFFTALRQVGKNFEKITSRVQSKNKDQVRHYYYRLVRRMN. Disordered stretches follow at residues 486–523 and 626–679; these read SGVH…PGEW and SPKG…TPCG. Over residues 488-499 the composition is skewed to basic and acidic residues; sequence VHDRPARSRDDY.

As to quaternary structure, interacts only with active kinase forms of TOUSLED. Interacts with SNL1. Phosphorylated in vitro by TOUSLED. Expressed in flowers, roots and leaves.

It is found in the nucleus. In Arabidopsis thaliana (Mouse-ear cress), this protein is TSL-kinase interacting protein 1 (TKI1).